A 465-amino-acid chain; its full sequence is Deoxyguanosinetriphosphate triphosphohydrolase-like protein (465 aa).

The disordered stretch occupies residues 1–22; the sequence is MKWDKLLNDKRRRESGVTRSKN. Residues 63–252 enclose the HD domain; it reads RLTHSMEVST…LEVADDIAYL (190 aa).

Belongs to the dGTPase family. Type 3 subfamily.

The sequence is that of Deoxyguanosinetriphosphate triphosphohydrolase-like protein from Listeria innocua serovar 6a (strain ATCC BAA-680 / CLIP 11262).